A 192-amino-acid polypeptide reads, in one-letter code: Transmembrane protein 276 (192 aa).

A signal peptide spans 1-32 (MVSKPRTEWSTVLSHLVLAGVSLHAAVSSVQS). Helical transmembrane passes span 35–55 (GAAA…APGP), 63–83 (AGAW…FHWV), 92–112 (LLLG…PEGC), and 114–134 (VAGQ…AVFT).

Its subcellular location is the membrane. This chain is Transmembrane protein 276, found in Mus musculus (Mouse).